A 944-amino-acid polypeptide reads, in one-letter code: Protocadherin gamma-C5 (944 aa).

Positions 1–29 (MGPKTLPQLAGKWQVLCMLSLCCWGWVSG) are cleaved as a signal peptide. 6 consecutive Cadherin domains span residues 30 to 133 (QLRY…SPSF), 134 to 242 (ATPE…APTF), 243 to 350 (QSSV…APEV), 351 to 454 (LLAS…APRF), 455 to 564 (NQQL…APAV), and 571 to 677 (WEHS…MPKS). The Extracellular segment spans residues 30–693 (QLRYSVVEES…PPERSDLTLY (664 aa)). Asn265, Asn443, and Asn547 each carry an N-linked (GlcNAc...) asparagine glycan. The helical transmembrane segment at 694–714 (LIVALATVSLLSLVTFTFLSA) threads the bilayer. Residues 715–944 (KCLQGNADGD…KKKSGKKEKK (230 aa)) are Cytoplasmic-facing. Disordered regions lie at residues 722–747 (DGDG…QSSP), 812–853 (SNTL…WPNN), and 914–944 (ATLT…KEKK). Positions 820–853 (QQAPPNTDWRFSQAQRPGTSGSQNGDDTGTWPNN) are enriched in polar residues. The segment covering 934-944 (NKKKSGKKEKK) has biased composition (basic residues).

The protein resides in the cell membrane. Potential calcium-dependent cell-adhesion protein. May be involved in the establishment and maintenance of specific neuronal connections in the brain. The chain is Protocadherin gamma-C5 (PCDHGC5) from Pan troglodytes (Chimpanzee).